Here is a 535-residue protein sequence, read N- to C-terminus: MGPPVHHLLTGLCVGVALGWVGGSVPNLGPAEQEQNHYLAQLFGLYGENGTLTAGGLARLLHSLGLGRVQGLRLGHHEPPTGRAAPTSGDNFTHRLQEPELSVDIWAGMPLGPSGWGDQEESKAPDLHGSGPSSLDLFQRLLLLDHSLADHLNEDCLNGSQLLVNFGLSPVAPLTPRQFALLCPALLYQIDSRVCIKTPAPAPPGDVLSALLHSGLAVLFLSLPAPLSLLLLRLLGPRLLRPVLGFLGALAVGTLCGDALLHLLPHAQGGRHTGPSEQSEEDLGPGLSVLGGLFLLFMLENTLGLVRHRGLRPRCCRNKRDLGEPNPDPEDGSGMVLRPLQAASEPEVQGQRENRQSSPSLAPPGHQGHSHEHRGGSIAWMVLLGDCLHNLTDGLALGAAFSDGFSSGLSTTLAVFCHELPHELGDFAMLLQEGLSFRKLLLLSLVSGALGLGGAALGVGLSLGPVPLTPWVFGTTAGVFLYVALVDMLPTLLRPPEPLPVFHVLLQGLGLLLGGSLMFTIALLEEQLVPTVPDG.

An N-terminal signal peptide occupies residues 1 to 19; sequence MGPPVHHLLTGLCVGVALG. The Extracellular segment spans residues 20–210; it reads WVGGSVPNLG…PAPPGDVLSA (191 aa). N-linked (GlcNAc...) asparagine glycans are attached at residues Asn-49 and Asn-158. A helical membrane pass occupies residues 211–231; it reads LLHSGLAVLFLSLPAPLSLLL. Over 232 to 242 the chain is Cytoplasmic; it reads LRLLGPRLLRP. A helical membrane pass occupies residues 243–263; it reads VLGFLGALAVGTLCGDALLHL. Residues 264–285 lie on the Extracellular side of the membrane; that stretch reads LPHAQGGRHTGPSEQSEEDLGP. A helical transmembrane segment spans residues 286–306; the sequence is GLSVLGGLFLLFMLENTLGLV. Residues 307-439 lie on the Cytoplasmic side of the membrane; the sequence is RHRGLRPRCC…LLQEGLSFRK (133 aa). The disordered stretch occupies residues 316–373; it reads CRNKRDLGEPNPDPEDGSGMVLRPLQAASEPEVQGQRENRQSSPSLAPPGHQGHSHEH. Ser-333 is subject to Phosphoserine. His-371 carries the post-translational modification Pros-methylhistidine. A helical membrane pass occupies residues 440–460; sequence LLLLSLVSGALGLGGAALGVG. At 461 to 465 the chain is on the extracellular side; sequence LSLGP. The helical transmembrane segment at 466 to 486 threads the bilayer; the sequence is VPLTPWVFGTTAGVFLYVALV. The Cytoplasmic portion of the chain corresponds to 487-503; the sequence is DMLPTLLRPPEPLPVFH. A helical transmembrane segment spans residues 504-524; sequence VLLQGLGLLLGGSLMFTIALL. At 525–535 the chain is on the extracellular side; it reads EEQLVPTVPDG.

Belongs to the ZIP transporter (TC 2.A.5) family. As to quaternary structure, homodimer. N-Glycosylated. Post-translationally, methylated at His-371 by METTL9. In terms of tissue distribution, expressed in all stages of eye development and primarily in the sclera and several layers of the retina, including the inner segment, outer plexiform layer and ganglion cell layer. Expressed in pancreas, kidney and the proximal and distal small intestine as well as in the embryonic visceral yolk sac. In the proximal intestine, expression is predominant in the crypts but diminishes toward the apical regions of the villi.

The protein resides in the basolateral cell membrane. It carries out the reaction Zn(2+)(in) = Zn(2+)(out). Its function is as follows. Uniporter that transports zinc(2+) into polarized cells of enterocytes, pancreatic acinar and endoderm cells across the basolateral membrane and participates, notably, in zinc excretion from the intestine by the uptake of zinc from the blood into the intestine. The transport mechanism is temperature- and concentration-dependent and saturable. In addition, is also a high affinity copper transporter in vitro. Also may regulate glucose-stimulated insulin secretion (GSIS) in islets primarily through the zinc-activated SIRT1-PPARGC1A axis. Could regulate the BMP/TGF-beta (bone morphogenetic protein/transforming growth factor-beta) signaling pathway and modulates extracellular matrix (ECM) proteins of the sclera. Plays a role in eye development. The chain is Zinc transporter ZIP5 from Mus musculus (Mouse).